Reading from the N-terminus, the 514-residue chain is Cytochrome P450 monooxygenase nodJ (514 aa).

A helical transmembrane segment spans residues 2-24; sequence ELIVIIITLAFCILLYGTRWRAA. N-linked (GlcNAc...) asparagine glycosylation is found at Asn144, Asn245, and Asn416. Cys432 contributes to the heme binding site.

It belongs to the cytochrome P450 family. Heme serves as cofactor.

The protein localises to the membrane. It participates in secondary metabolite biosynthesis. Cytochrome P450 monooxygenase; part of the gene cluster that mediates the biosynthesis of the indole diterpenes nodulisporic acids (NA). Nodulisporic acid A (NAA) and its chemically modified derivatives are of particular significance because of their highly potent insecticidal activity against blood-feeding arthropods and lack of observable adverse effects on mammals, in particular the tremogenicity associated with the paspaline-derived IDTs is not observed. The geranylgeranyl diphosphate (GGPP) synthase ggs1, localized outside of the cluster, is proposed to catalyze the first step in nodulisporic acid biosynthesis via conversion of farnesyl pyrophosphate and isopentyl pyrophosphate into geranylgeranyl pyrophosphate (GGPP). Condensation of indole-3-glycerol phosphate with GGPP by the prenyl transferase nodC then forms 3-geranylgeranylindole (3-GGI). Epoxidation by the FAD-dependent monooxygenase nodM leads to a single-epoxidized-GGI that is substrate of the terpene cyclase nodB for cyclization to yield emindole SB. The terminal methyl carbon, C28, of emindole SB is then oxidized by the cytochrome P450 monooxygenase nodW to produce nodulisporic acid F (NAF), the pentacyclic core of NAA. NAF is converted to nodulisporic acid E (NAE) via prenylation. This step is probably performed by one of the indole diterpene prenyltransferases nodD1 or nodD2. Several oxidation steps performed by the FAD-linked oxidoreductase nodO and one of the cytochrome P450 monooxygenase nodR, nodX or nodZ further convert NAE to nodulisporic acid D (NAD). NAD is substrate of cytochrome P450 monooxygenase nodJ to produce the precursor of nodulisporic acid C (NAC), converted to NAC by one of the indole diterpene prenyltransferases nodD1 or nodD2. The FAD-dependent monooxygenase nodY2 then oxidizes NAC to nodulisporic acid B (NAB). Finally NAB is converted to NAA by one of the cytochrome P450 monooxygenases nodR, nodX or nodZ. This Hypoxylon pulicicidum protein is Cytochrome P450 monooxygenase nodJ.